A 168-amino-acid polypeptide reads, in one-letter code: UPF0262 protein BRADO6636 (168 aa).

The protein belongs to the UPF0262 family.

In Bradyrhizobium sp. (strain ORS 278), this protein is UPF0262 protein BRADO6636.